A 238-amino-acid chain; its full sequence is Ribonuclease PH (238 aa).

Phosphate-binding positions include arginine 86 and 124–126 (GTR).

Belongs to the RNase PH family. Homohexameric ring arranged as a trimer of dimers.

It catalyses the reaction tRNA(n+1) + phosphate = tRNA(n) + a ribonucleoside 5'-diphosphate. In terms of biological role, phosphorolytic 3'-5' exoribonuclease that plays an important role in tRNA 3'-end maturation. Removes nucleotide residues following the 3'-CCA terminus of tRNAs; can also add nucleotides to the ends of RNA molecules by using nucleoside diphosphates as substrates, but this may not be physiologically important. Probably plays a role in initiation of 16S rRNA degradation (leading to ribosome degradation) during starvation. In Salmonella gallinarum (strain 287/91 / NCTC 13346), this protein is Ribonuclease PH.